The chain runs to 223 residues: Urease accessory protein UreG (223 aa).

Residues 1-31 (MAKHSHDHTHDHHDRPRRVRKPGEPLRIGVG) form a disordered region. 32 to 39 (GPVGSGKT) contributes to the GTP binding site.

The protein belongs to the SIMIBI class G3E GTPase family. UreG subfamily. In terms of assembly, homodimer. UreD, UreF and UreG form a complex that acts as a GTP-hydrolysis-dependent molecular chaperone, activating the urease apoprotein by helping to assemble the nickel containing metallocenter of UreC. The UreE protein probably delivers the nickel.

The protein localises to the cytoplasm. Functionally, facilitates the functional incorporation of the urease nickel metallocenter. This process requires GTP hydrolysis, probably effectuated by UreG. This chain is Urease accessory protein UreG, found in Mycobacterium marinum (strain ATCC BAA-535 / M).